The sequence spans 61 residues: Small ribosomal subunit protein bS21 (61 aa).

The disordered stretch occupies residues 36–61 (EHYESPSVKRKKKAEAARKRKYKYGR). Residues 43–61 (VKRKKKAEAARKRKYKYGR) are compositionally biased toward basic residues.

It belongs to the bacterial ribosomal protein bS21 family.

The polypeptide is Small ribosomal subunit protein bS21 (rpsU) (Caldanaerobacter subterraneus subsp. tengcongensis (strain DSM 15242 / JCM 11007 / NBRC 100824 / MB4) (Thermoanaerobacter tengcongensis)).